A 1230-amino-acid chain; its full sequence is ATP-dependent helicase/nuclease subunit A (1230 aa).

Positions 9-480 constitute a UvrD-like helicase ATP-binding domain; the sequence is STWTDDQWKA…IDLNKNFRSR (472 aa). 30–37 lines the ATP pocket; that stretch reads AAAGSGKT. The 290-residue stretch at 507 to 796 folds into the UvrD-like helicase C-terminal domain; the sequence is QAELKLGASY…RLMTIHSSKG (290 aa).

The protein belongs to the helicase family. AddA subfamily. As to quaternary structure, heterodimer of AddA and AddB/RexB. It depends on Mg(2+) as a cofactor.

It carries out the reaction Couples ATP hydrolysis with the unwinding of duplex DNA by translocating in the 3'-5' direction.. The catalysed reaction is ATP + H2O = ADP + phosphate + H(+). In terms of biological role, the heterodimer acts as both an ATP-dependent DNA helicase and an ATP-dependent, dual-direction single-stranded exonuclease. Recognizes the chi site generating a DNA molecule suitable for the initiation of homologous recombination. The AddA nuclease domain is required for chi fragment generation; this subunit has the helicase and 3' -&gt; 5' nuclease activities. The chain is ATP-dependent helicase/nuclease subunit A from Bacillus licheniformis (strain ATCC 14580 / DSM 13 / JCM 2505 / CCUG 7422 / NBRC 12200 / NCIMB 9375 / NCTC 10341 / NRRL NRS-1264 / Gibson 46).